The primary structure comprises 73 residues: Conotoxin ArMKLT2-022 (73 aa).

Positions 1-22 (MKLTCVLIIAVLFLTACQLTTG) are cleaved as a signal peptide. Residues 23–40 (EQKDHAQRSADRNSKLTR) constitute a propeptide that is removed on maturation. Glutamine 41 bears the Pyrrolidone carboxylic acid mark. 3 disulfide bridges follow: cysteine 42–cysteine 56, cysteine 49–cysteine 60, and cysteine 55–cysteine 67.

This sequence belongs to the conotoxin O1 superfamily. As to expression, expressed by the venom duct.

It is found in the secreted. The chain is Conotoxin ArMKLT2-022 from Conus arenatus (Sand-dusted cone).